Here is a 431-residue protein sequence, read N- to C-terminus: Enolase (431 aa).

Position 167 (glutamine 167) interacts with (2R)-2-phosphoglycerate. Residue glutamate 209 is the Proton donor of the active site. Residues aspartate 246, glutamate 289, and aspartate 316 each coordinate Mg(2+). 4 residues coordinate (2R)-2-phosphoglycerate: lysine 341, arginine 370, serine 371, and lysine 392. Residue lysine 341 is the Proton acceptor of the active site.

This sequence belongs to the enolase family. As to quaternary structure, component of the RNA degradosome, a multiprotein complex involved in RNA processing and mRNA degradation. The cofactor is Mg(2+).

It localises to the cytoplasm. Its subcellular location is the secreted. It is found in the cell surface. The enzyme catalyses (2R)-2-phosphoglycerate = phosphoenolpyruvate + H2O. It participates in carbohydrate degradation; glycolysis; pyruvate from D-glyceraldehyde 3-phosphate: step 4/5. Functionally, catalyzes the reversible conversion of 2-phosphoglycerate (2-PG) into phosphoenolpyruvate (PEP). It is essential for the degradation of carbohydrates via glycolysis. The polypeptide is Enolase (Shewanella loihica (strain ATCC BAA-1088 / PV-4)).